A 319-amino-acid chain; its full sequence is MIGLIITATISVTLIMVLLVVAGTFTWVERRLLGFVQERLGPNRVGPFGSLQWIADTVKILTKEDRPPPGADKFAYILAPAVAATPVLAGFGVIEFGDGLSLAAVDVGVLFLIGMLGLTAYAVVLGAWASHSRFALMGGMRAAAQMLAYEVFLGLSLMGAVMLAGSLSMNAIVEAQRDVWFVVLQPLGAALFCIAGVAAAHRLPFDLPESENDLVAGFMTEYTGMSFGLFFLGEYLAVLLVSALAVTLFFGGWLGPWLPGPIWFGLKTGVIAVVFVWLRATLPRPRYDQLLSFAWKIALPLSLANLLLTGIVVVARSAS.

Helical transmembrane passes span 1 to 21 (MIGL…LLVV), 74 to 94 (FAYI…FGVI), 107 to 127 (VGVL…VLGA), 147 to 167 (LAYE…AGSL), 179 to 199 (VWFV…GVAA), 238 to 258 (VLLV…GPWL), 262 to 282 (IWFG…RATL), and 293 to 313 (FAWK…GIVV).

The protein belongs to the complex I subunit 1 family. NDH-1 is composed of 14 different subunits. Subunits NuoA, H, J, K, L, M, N constitute the membrane sector of the complex.

Its subcellular location is the cell inner membrane. It carries out the reaction a quinone + NADH + 5 H(+)(in) = a quinol + NAD(+) + 4 H(+)(out). Functionally, NDH-1 shuttles electrons from NADH, via FMN and iron-sulfur (Fe-S) centers, to quinones in the respiratory chain. The immediate electron acceptor for the enzyme in this species is believed to be ubiquinone. Couples the redox reaction to proton translocation (for every two electrons transferred, four hydrogen ions are translocated across the cytoplasmic membrane), and thus conserves the redox energy in a proton gradient. This subunit may bind ubiquinone. In Rhodopseudomonas palustris (strain BisB5), this protein is NADH-quinone oxidoreductase subunit H 1.